A 215-amino-acid chain; its full sequence is 7-methyl-GTP pyrophosphatase (215 aa).

D79 functions as the Proton acceptor in the catalytic mechanism.

Belongs to the Maf family. YceF subfamily. Requires a divalent metal cation as cofactor.

The protein resides in the cytoplasm. The catalysed reaction is N(7)-methyl-GTP + H2O = N(7)-methyl-GMP + diphosphate + H(+). Functionally, nucleoside triphosphate pyrophosphatase that hydrolyzes 7-methyl-GTP (m(7)GTP). May have a dual role in cell division arrest and in preventing the incorporation of modified nucleotides into cellular nucleic acids. The protein is 7-methyl-GTP pyrophosphatase of Burkholderia thailandensis (strain ATCC 700388 / DSM 13276 / CCUG 48851 / CIP 106301 / E264).